Reading from the N-terminus, the 407-residue chain is Obg-like ATPase homolog (407 aa).

The OBG-type G domain occupies 46-301; the sequence is LKIGIVGMPN…LTPEEAAQEC (256 aa). Residues 55-60 and Met-249 contribute to the ATP site; that span reads NIGKST. The 84-residue stretch at 322 to 405 folds into the TGS domain; the sequence is NLIHYFTASE…EPGDIIFWKI (84 aa).

This sequence belongs to the TRAFAC class OBG-HflX-like GTPase superfamily. OBG GTPase family.

Functionally, hydrolyzes ATP, and can also hydrolyze GTP with lower efficiency. Has lower affinity for GTP. The polypeptide is Obg-like ATPase homolog (Schizosaccharomyces pombe (strain 972 / ATCC 24843) (Fission yeast)).